Here is a 43-residue protein sequence, read N- to C-terminus: uncharacterized protein (43 aa).

2 stretches are compositionally biased toward polar residues: residues 1 to 19 and 33 to 43; these read MSQK…SGAS and PENSISKTFSK. Residues 1 to 43 are disordered; that stretch reads MSQKLSFFQQNTRNGSGASRTLVIKPPTIQPKPENSISKTFSK.

This is an uncharacterized protein from Dictyostelium discoideum (Social amoeba).